The following is a 584-amino-acid chain: Tyrosine-protein kinase Dnt (584 aa).

An N-terminal signal peptide occupies residues 1–40 (MESVNKCGKSASTRNCTVKMSRKMWVLSLLALAALQLHSG). At 41–208 (SEVAAHLNVF…LETVMLPPTG (168 aa)) the chain is on the extracellular side. In terms of domain architecture, WIF spans 49–180 (VFLNPVEVMR…HLVFRRKKIC (132 aa)). Asn124, Asn163, Asn168, and Asn183 each carry an N-linked (GlcNAc...) asparagine glycan. A helical membrane pass occupies residues 209–229 (LITLVVGVSVAMGSVCLLLMI). The Cytoplasmic segment spans residues 230-584 (AYCVKGAANK…EFYSQITRYV (355 aa)). Residues 241–261 (QHHQHGGQPMRTSSFQRLNTH) are disordered. Residues 250 to 261 (MRTSSFQRLNTH) show a composition bias toward polar residues. The Protein kinase domain occupies 317–577 (VRLSSLLQEG…QLQSCLSEFY (261 aa)). ATP is bound by residues 323–331 (LQEGTFGRV) and Lys345. The active-site Proton acceptor is Asp442. Position 472 is a phosphotyrosine; by autocatalysis (Tyr472).

It belongs to the protein kinase superfamily. Tyr protein kinase family. Expressed in dynamic domains in the embryonic epidermis, many of which border on sites of epithelial invagination into the embryo interior, including ventral furrow, cephalic furrow, fore- and hindgut, optic lobe and tracheal pits. Later in embryogenesis, expression is seen in imaginal tissues.

Its subcellular location is the cell membrane. The enzyme catalyses L-tyrosyl-[protein] + ATP = O-phospho-L-tyrosyl-[protein] + ADP + H(+). In terms of biological role, may play an essential role in neuronal pathway recognition and ventral muscle attachment site selection. The polypeptide is Tyrosine-protein kinase Dnt (dnt) (Drosophila melanogaster (Fruit fly)).